The chain runs to 151 residues: US8.5 protein (151 aa).

The disordered stretch occupies residues 27–107 (SSQPLDPEGP…APSPHPRPPG (81 aa)). Residues 80-91 (SDERGPPRHDRP) show a composition bias toward basic and acidic residues.

It localises to the host nucleus. The protein localises to the host nucleolus. The chain is US8.5 protein (US8.5) from Human herpesvirus 1 (strain F) (HHV-1).